The following is a 367-amino-acid chain: Cytochrome b (367 aa).

Helical transmembrane passes span 33-53 (FGSL…FLAM), 77-98 (WVLR…YLHI), 113-133 (WNMG…GYVL), and 178-198 (FFAF…VHLL). Heme b is bound by residues His83 and His97. Residues His182 and His196 each coordinate heme b. Position 201 (His201) interacts with a ubiquinone. Transmembrane regions (helical) follow at residues 226 to 246 (IKDI…VLFS), 288 to 308 (LGGV…PFLH), 320 to 340 (FSQC…WIGG), and 347 to 367 (YIII…VIMP).

This sequence belongs to the cytochrome b family. In terms of assembly, the cytochrome bc1 complex contains 11 subunits: 3 respiratory subunits (MT-CYB, CYC1 and UQCRFS1), 2 core proteins (UQCRC1 and UQCRC2) and 6 low-molecular weight proteins (UQCRH/QCR6, UQCRB/QCR7, UQCRQ/QCR8, UQCR10/QCR9, UQCR11/QCR10 and a cleavage product of UQCRFS1). This cytochrome bc1 complex then forms a dimer. Requires heme b as cofactor.

The protein localises to the mitochondrion inner membrane. Component of the ubiquinol-cytochrome c reductase complex (complex III or cytochrome b-c1 complex) that is part of the mitochondrial respiratory chain. The b-c1 complex mediates electron transfer from ubiquinol to cytochrome c. Contributes to the generation of a proton gradient across the mitochondrial membrane that is then used for ATP synthesis. This is Cytochrome b (MT-CYB) from Hypsugo savii (Savi's pipistrelle).